Reading from the N-terminus, the 152-residue chain is Interleukin-1 family member 10 (152 aa).

This sequence belongs to the IL-1 family. As to quaternary structure, interacts with cargo receptor TMED10; the interaction mediates the translocation from the cytoplasm into the ERGIC (endoplasmic reticulum-Golgi intermediate compartment) and thereby secretion.

The protein resides in the cytoplasm. The protein localises to the endoplasmic reticulum-Golgi intermediate compartment. It is found in the secreted. Functionally, cytokine with immunomodulatory activity. Alone, does not induce cytokine production, but reduces IL22 and IL17A production by T-cells in response to heat-killed Candida albicans. Reduces IL36G-induced production of IL8 by peripheral blood mononuclear cells. Increases IL6 production by dendritic cells stimulated by bacterial lipopolysaccharides (LPS). Ligand for IL-36R/IL1RL2. In Mus musculus (Mouse), this protein is Interleukin-1 family member 10 (Il1f10).